A 428-amino-acid polypeptide reads, in one-letter code: Immunoglobulin superfamily containing leucine-rich repeat protein (428 aa).

The N-terminal stretch at 1 to 18 is a signal peptide; the sequence is MRALCLLCWAVLLNLVRA. One can recognise an LRRNT domain in the interval 19 to 50; the sequence is CPEPCDCGEKYGFQIADCAYRDLEGVPPGFPA. N-linked (GlcNAc...) asparagine glycosylation is present at Asn51. 5 LRR repeats span residues 51 to 72, 75 to 98, 99 to 122, 123 to 144, and 147 to 168; these read NVTT…AFRE, LLQS…APLS, HLKS…HNLS, ALQL…AFSS, and ALRS…TFAP. One can recognise an LRRCT domain in the interval 180–231; the sequence is NPFDCTCGIVWFKTWALASAVSIPEQDNIACTTPHVLKGIPLGRLPPLPCSA. The region spanning 232–343 is the Ig-like domain; the sequence is PSVQLSYQPS…GSAESSVNVA (112 aa). A disulfide bridge links Cys257 with Cys327. Asn309 carries N-linked (GlcNAc...) asparagine glycosylation.

Detected in thyroid, heart, retina and spinal cord.

The protein localises to the secreted. In Mus musculus (Mouse), this protein is Immunoglobulin superfamily containing leucine-rich repeat protein (Islr).